The following is a 270-amino-acid chain: Shikimate dehydrogenase (NADP(+)) (270 aa).

Shikimate is bound by residues 14–16 and threonine 61; that span reads SLS. The active-site Proton acceptor is lysine 65. Residue aspartate 77 coordinates NADP(+). 2 residues coordinate shikimate: asparagine 86 and aspartate 101. NADP(+)-binding positions include 125–129 and isoleucine 210; that span reads GNGGA. Tyrosine 212 is a binding site for shikimate. Residue glycine 233 coordinates NADP(+).

This sequence belongs to the shikimate dehydrogenase family. As to quaternary structure, homodimer.

It catalyses the reaction shikimate + NADP(+) = 3-dehydroshikimate + NADPH + H(+). It functions in the pathway metabolic intermediate biosynthesis; chorismate biosynthesis; chorismate from D-erythrose 4-phosphate and phosphoenolpyruvate: step 4/7. Its function is as follows. Involved in the biosynthesis of the chorismate, which leads to the biosynthesis of aromatic amino acids. Catalyzes the reversible NADPH linked reduction of 3-dehydroshikimate (DHSA) to yield shikimate (SA). The chain is Shikimate dehydrogenase (NADP(+)) from Clostridium beijerinckii (strain ATCC 51743 / NCIMB 8052) (Clostridium acetobutylicum).